Consider the following 307-residue polypeptide: Voltage-dependent anion channel-forming protein sll1024 (307 aa).

4 consecutive transmembrane segments (helical) span residues 26-46 (VIPA…GVTL), 54-74 (FSIP…LLVF), 226-246 (LIFL…HWAT), and 247-267 (AFVV…GVEI).

It belongs to the anion channel-forming bestrophin (TC 1.A.46) family.

The protein resides in the cell membrane. The chain is Voltage-dependent anion channel-forming protein sll1024 from Synechocystis sp. (strain ATCC 27184 / PCC 6803 / Kazusa).